We begin with the raw amino-acid sequence, 262 residues long: MDKRWSLQGMTALVTGGASGIGHAIVEELAGLGARIYVCDISETLLNQSLSEWEKKGFQVSGSICDVSSHSERETLMQTVSKMFDGKLNILVNNVGVVNPKPTIEYVAADFSFSISTNLESAYHLSQLSHPLLKASEFGSIIFISSVGGVVSMECGSIYSLTKGALNQLAKTLACEWARDGIRANSVAPNFIYTAMAQPFFKDADYEKSLVSRTPLGRAGEPNEVSSLVAFLCLPAASYITGQTICVDGGLTVNGFSYKPQA.

NADP(+) is bound at residue 13 to 37 (LVTGGASGIGHAIVEELAGLGARIY). Ser146 is a substrate binding site. Tyr159 serves as the catalytic Proton acceptor.

Belongs to the short-chain dehydrogenases/reductases (SDR) family. SDR65C subfamily.

This is Tropinone reductase homolog At2g30670 from Arabidopsis thaliana (Mouse-ear cress).